The sequence spans 863 residues: MASLFSDFGFIWYWKELNKIEFMYFKELLIHEILQMGLKQISWTEVKEASREDLAILLVKHCDGNQAWDTTFRVFQMIGRNVITNRATGEIAAHSTIYRAHLKEKLTHDCSRKFNISIQNFFQDEYDHLENLLVPNGTENNPKMVVLQGVAGIGKTILLKNLMIVWSEGLVFQNKFSYIFYFCCHDVKQLQTASLADLISREWPSPSAPMEEILSQPEKLLFIIDSLEGMEWNVTQQDSQLCYNCMEKQPVNVLLSSLLRKKILPESSLLISTSCETFKDLKDWIEYTNVRTITGFKENNINMCFHSLFQDRNIAQEAFSLIRENEQLFTVCQAPVVCYMVATCLKNEIESGKDPVSICRRTTSLYTTHILNLFIPHNAQNPSNNSEDLLDNLCFLAVEGMWTDISVFNEEALRRNGIMDSDIPTLLDIGILEQSRESENSYIFLHPSVQEFCAAMFYLLHSEMDHSCQGVYFIETFLFTFLNKIKKQWVFLGCFFFGLLHETEQEKLEAFFGYHLSKELRRQLFLWLELLLDTLHPDVKKINTMKFFYCLFEMEEEVFVQSAMNCREQIDVVVKGYSDFIVAAYCLSHGSALTDFSISAQNVLNEELGQRGKLLILWHQICSVFLRNKDIKTLRIEDTIFNEPVFKIFYSYLKNSSCILKTLVAYNVSFLCDKRLFLELIQSYNLEELYLRGTFLSHSDVEMLCDILNQAECNIRILDLANCSLCEHSWDYLSDVLRQNKSLRYLNISYNNLKDEGLKALCRALTLPNSALHSLSLEACQLTGACCKDLASTFTRYKCLRRINLAKNSLGFSGLFVLCKAMKDQTCTLYELKLRMADFDSDSQEFLLSEMERNKILSIENGV.

One can recognise a Pyrin domain in the interval 1–93 (MASLFSDFGF…TNRATGEIAA (93 aa)). Residues 143 to 466 (KMVVLQGVAG…FYLLHSEMDH (324 aa)) enclose the NACHT domain. 149–156 (GVAGIGKT) contacts ATP. LRR repeat units follow at residues 618 to 643 (WHQI…IFNE), 683 to 706 (SYNL…MLCD), 717 to 740 (ILDL…LRQN), 741 to 763 (KSLR…ALCR), 765 to 782 (LTLP…ACQL), 797 to 824 (YKCL…AMKD), and 843 to 863 (SQEF…ENGV).

The protein belongs to the NLRP family.

Functionally, may be involved in inflammation and recognition of cytosolic pathogen-associated molecular patterns (PAMPs) not intercepted by membrane-bound receptors. The chain is NACHT, LRR and PYD domains-containing protein 4B (Nlrp4b) from Mus musculus (Mouse).